Reading from the N-terminus, the 429-residue chain is Protein phosphatase 2C homolog 2 (429 aa).

Positions 16–291 (LYGLSAMQGW…DNMTMIIIGL (276 aa)) constitute a PPM-type phosphatase domain. Mn(2+)-binding residues include Asp-64, Gly-65, Asp-233, and Asp-282. Disordered regions lie at residues 320–348 (YGKSEFRGPGIRNQFEETPDNYDLENDRS) and 384–429 (RDVT…SASS). Residues 384-397 (RDVTNHLQHDKAEE) show a composition bias toward basic and acidic residues. Over residues 405–419 (SESPSSANKNSSGSG) the composition is skewed to low complexity.

This sequence belongs to the PP2C family. Requires Mg(2+) as cofactor. Mn(2+) serves as cofactor.

Its subcellular location is the cytoplasm. The protein resides in the nucleus. It catalyses the reaction O-phospho-L-seryl-[protein] + H2O = L-seryl-[protein] + phosphate. The enzyme catalyses O-phospho-L-threonyl-[protein] + H2O = L-threonyl-[protein] + phosphate. Its function is as follows. Dephosphorylating regulator for many key proteins. Dephosphorylates sakA, to negatively regulate the stress-activated p38MAPK cascade. In Aspergillus fumigatus (strain ATCC MYA-4609 / CBS 101355 / FGSC A1100 / Af293) (Neosartorya fumigata), this protein is Protein phosphatase 2C homolog 2.